The sequence spans 304 residues: N-carbamoyl-D-amino acid hydrolase (304 aa).

In terms of domain architecture, CN hydrolase spans Met5–Leu276. Catalysis depends on residues Glu47, Lys127, and Cys172.

It carries out the reaction an N-carbamoyl-D-amino acid + H2O + 2 H(+) = a D-alpha-amino acid + NH4(+) + CO2. Functionally, the enzyme catalyzes the hydrolysis of N-carbamoyl-D-amino acids to the corresponding which are useful intermediates in the preparation of beta-lactam antibiotics. Industrial production of beta-lactam antibiotics is now being developed using this enzyme. The sequence is that of N-carbamoyl-D-amino acid hydrolase from Agrobacterium sp. (strain KNK712).